The chain runs to 157 residues: 6,7-dimethyl-8-ribityllumazine synthase (157 aa).

Residues phenylalanine 22, 56 to 58, and 80 to 82 each bind 5-amino-6-(D-ribitylamino)uracil; these read AME and AVV. 85-86 lines the (2S)-2-hydroxy-3-oxobutyl phosphate pocket; sequence ET. The Proton donor role is filled by histidine 88. Phenylalanine 113 lines the 5-amino-6-(D-ribitylamino)uracil pocket. A (2S)-2-hydroxy-3-oxobutyl phosphate-binding site is contributed by arginine 127.

It belongs to the DMRL synthase family.

The enzyme catalyses (2S)-2-hydroxy-3-oxobutyl phosphate + 5-amino-6-(D-ribitylamino)uracil = 6,7-dimethyl-8-(1-D-ribityl)lumazine + phosphate + 2 H2O + H(+). Its pathway is cofactor biosynthesis; riboflavin biosynthesis; riboflavin from 2-hydroxy-3-oxobutyl phosphate and 5-amino-6-(D-ribitylamino)uracil: step 1/2. Functionally, catalyzes the formation of 6,7-dimethyl-8-ribityllumazine by condensation of 5-amino-6-(D-ribitylamino)uracil with 3,4-dihydroxy-2-butanone 4-phosphate. This is the penultimate step in the biosynthesis of riboflavin. The protein is 6,7-dimethyl-8-ribityllumazine synthase of Levilactobacillus brevis (strain ATCC 367 / BCRC 12310 / CIP 105137 / JCM 1170 / LMG 11437 / NCIMB 947 / NCTC 947) (Lactobacillus brevis).